The chain runs to 455 residues: Chromosomal replication initiator protein DnaA (455 aa).

Residues 1–75 form a domain I, interacts with DnaA modulators region; the sequence is MDTNNNIEKE…EILSQNKVGM (75 aa). The tract at residues 75 to 106 is domain II; sequence MHLAHSVDVRIEVAPKIQINAQANINYKAIKT. The interval 107–321 is domain III, AAA+ region; the sequence is SVKDSYTFEN…GAIIKISVNA (215 aa). ATP is bound by residues Gly-151, Gly-153, Lys-154, and Thr-155. Positions 322 to 455 are domain IV, binds dsDNA; it reads NLMNAPIDLN…DKKTAFNSSE (134 aa).

This sequence belongs to the DnaA family. In terms of assembly, oligomerizes as a right-handed, spiral filament on DNA at oriC.

The protein resides in the cytoplasm. Its function is as follows. Plays an essential role in the initiation and regulation of chromosomal replication. ATP-DnaA binds to the origin of replication (oriC) to initiate formation of the DNA replication initiation complex once per cell cycle. Binds the DnaA box (a 9 base pair repeat at the origin) and separates the double-stranded (ds)DNA. Forms a right-handed helical filament on oriC DNA; dsDNA binds to the exterior of the filament while single-stranded (ss)DNA is stabiized in the filament's interior. The ATP-DnaA-oriC complex binds and stabilizes one strand of the AT-rich DNA unwinding element (DUE), permitting loading of DNA polymerase. After initiation quickly degrades to an ADP-DnaA complex that is not apt for DNA replication. Binds acidic phospholipids. The protein is Chromosomal replication initiator protein DnaA of Helicobacter pylori (strain P12).